A 211-amino-acid polypeptide reads, in one-letter code: Uracil phosphoribosyltransferase (211 aa).

5-phospho-alpha-D-ribose 1-diphosphate-binding positions include R79, R104, and 131–139; that span reads DPMLATGGS. Residues I196 and 201–203 contribute to the uracil site; that span reads GDA. 5-phospho-alpha-D-ribose 1-diphosphate is bound at residue D202.

The protein belongs to the UPRTase family. It depends on Mg(2+) as a cofactor.

It catalyses the reaction UMP + diphosphate = 5-phospho-alpha-D-ribose 1-diphosphate + uracil. It functions in the pathway pyrimidine metabolism; UMP biosynthesis via salvage pathway; UMP from uracil: step 1/1. With respect to regulation, allosterically activated by GTP. In terms of biological role, catalyzes the conversion of uracil and 5-phospho-alpha-D-ribose 1-diphosphate (PRPP) to UMP and diphosphate. The sequence is that of Uracil phosphoribosyltransferase from Lactococcus lactis subsp. lactis (strain IL1403) (Streptococcus lactis).